The chain runs to 442 residues: Trigger factor (442 aa).

Residues 165–250 (DDRVIIDFEG…LQKVMAPELP (86 aa)) form the PPIase FKBP-type domain.

Belongs to the FKBP-type PPIase family. Tig subfamily.

It localises to the cytoplasm. The enzyme catalyses [protein]-peptidylproline (omega=180) = [protein]-peptidylproline (omega=0). Its function is as follows. Involved in protein export. Acts as a chaperone by maintaining the newly synthesized protein in an open conformation. Functions as a peptidyl-prolyl cis-trans isomerase. This is Trigger factor from Coxiella burnetii (strain CbuG_Q212) (Coxiella burnetii (strain Q212)).